We begin with the raw amino-acid sequence, 378 residues long: Mitogen-activated protein kinase mpkC (378 aa).

The Protein kinase domain maps to 20–300; sequence YVNPQPIGMG…AQDALRYPYL (281 aa). ATP contacts are provided by residues 26-34 and Lys-49; that span reads IGMGSFGLV. Asp-141 acts as the Proton acceptor in catalysis. Thr-171 bears the Phosphothreonine mark. A TXY motif is present at residues 171–173; that stretch reads TGY. Phosphotyrosine is present on Tyr-173.

The protein belongs to the protein kinase superfamily. Ser/Thr protein kinase family. MAP kinase subfamily. HOG1 sub-subfamily. In terms of assembly, interacts with sakA upon osmotic and cell wall stresses. Mg(2+) serves as cofactor. In terms of processing, dually phosphorylated on Thr-171 and Tyr-173, which activates the enzyme.

The protein resides in the cytoplasm. The protein localises to the nucleus. It catalyses the reaction L-seryl-[protein] + ATP = O-phospho-L-seryl-[protein] + ADP + H(+). It carries out the reaction L-threonyl-[protein] + ATP = O-phospho-L-threonyl-[protein] + ADP + H(+). Activated by tyrosine and threonine phosphorylation. In terms of biological role, mitogen-activated protein kinase; part of an osmotic and general signal pathways involved in regulation of the response to the cell wall damage, oxidative stress, drug resistance, and establishment of infection. Required for growth on media where sorbitol or mannitol is the sole carbon source. With sakA, plays a redundant or cooperative role in the conidial stress resistance. Also plays a supportive role in osmotic stress adaptation when sakA is deficient. Involved in paradoxical growth, the cell wall integrity (CWI) pathway and biofilm formation. Acts by modulating sakA activity upon exposure to several types o stresses and during cell wall biosynthesis. Also collaborates with sakA to allow ful virulence in a neutropenic murine model of invasive pulmonary aspergillosis. MpkC and sakA have both independent and collaborative functions during the transcriptional response to transient osmotic stress, and mpkC plays a major role in the modulation of the response to DNA metabolism while activating mitochondrial functions and cation transport. The chain is Mitogen-activated protein kinase mpkC (mpkC) from Aspergillus fumigatus (strain ATCC MYA-4609 / CBS 101355 / FGSC A1100 / Af293) (Neosartorya fumigata).